A 111-amino-acid chain; its full sequence is Ribonuclease P protein component (111 aa).

This sequence belongs to the RnpA family. In terms of assembly, consists of a catalytic RNA component (M1 or rnpB) and a protein subunit.

The catalysed reaction is Endonucleolytic cleavage of RNA, removing 5'-extranucleotides from tRNA precursor.. In terms of biological role, RNaseP catalyzes the removal of the 5'-leader sequence from pre-tRNA to produce the mature 5'-terminus. It can also cleave other RNA substrates such as 4.5S RNA. The protein component plays an auxiliary but essential role in vivo by binding to the 5'-leader sequence and broadening the substrate specificity of the ribozyme. This Streptococcus thermophilus (strain CNRZ 1066) protein is Ribonuclease P protein component.